Consider the following 194-residue polypeptide: Alkyl hydroperoxide reductase AhpD (194 aa).

Cys-132 serves as the catalytic Proton donor. A disulfide bridge links Cys-132 with Cys-135. The active-site Cysteine sulfenic acid (-SOH) intermediate is Cys-135.

Belongs to the AhpD family.

It catalyses the reaction N(6)-[(R)-dihydrolipoyl]-L-lysyl-[lipoyl-carrier protein] + a hydroperoxide = N(6)-[(R)-lipoyl]-L-lysyl-[lipoyl-carrier protein] + an alcohol + H2O. In terms of biological role, antioxidant protein with alkyl hydroperoxidase activity. Required for the reduction of the AhpC active site cysteine residues and for the regeneration of the AhpC enzyme activity. The chain is Alkyl hydroperoxide reductase AhpD from Koribacter versatilis (strain Ellin345).